Consider the following 480-residue polypeptide: UDP-glucose 6-dehydrogenase 4 (480 aa).

NAD(+) is bound by residues 8 to 13, Asp-33, Arg-38, 86 to 90, 127 to 128, and Glu-161; these read GAGYVG, VNTPT, and ST. Substrate is bound by residues 157–161, 216–223, and 256–269; these read EFLAE, KLAANAFL, and RIGP…VGFG. Residue Cys-272 is the Nucleophile of the active site. 272-275 contacts NAD(+); it reads CFQK. Residue 334–335 participates in substrate binding; sequence FK. Arg-342 is an NAD(+) binding site. Residue Ser-393 is modified to Phosphoserine. Position 447 (Arg-447) interacts with substrate.

The protein belongs to the UDP-glucose/GDP-mannose dehydrogenase family.

It carries out the reaction UDP-alpha-D-glucose + 2 NAD(+) + H2O = UDP-alpha-D-glucuronate + 2 NADH + 3 H(+). It functions in the pathway nucleotide-sugar biosynthesis; UDP-alpha-D-glucuronate biosynthesis; UDP-alpha-D-glucuronate from UDP-alpha-D-glucose: step 1/1. Functionally, involved in the biosynthesis of UDP-glucuronic acid (UDP-GlcA), providing nucleotide sugars for cell-wall polymers. This chain is UDP-glucose 6-dehydrogenase 4 (UGD4), found in Oryza sativa subsp. japonica (Rice).